Consider the following 457-residue polypeptide: Ribosomal protein uS12 methylthiotransferase RimO (457 aa).

In terms of domain architecture, MTTase N-terminal spans 6 to 116 (PKVGFVSLGC…VMEAVHAALP (111 aa)). The [4Fe-4S] cluster site is built by cysteine 15, cysteine 51, cysteine 80, cysteine 147, cysteine 151, and cysteine 154. The Radical SAM core domain occupies 133-371 (LTPRHYAYLK…AKQAQISALR (239 aa)). The 69-residue stretch at 373-441 (ESKIGSVQQC…EHDLFGDALP (69 aa)) folds into the TRAM domain.

This sequence belongs to the methylthiotransferase family. RimO subfamily. [4Fe-4S] cluster serves as cofactor.

Its subcellular location is the cytoplasm. The enzyme catalyses L-aspartate(89)-[ribosomal protein uS12]-hydrogen + (sulfur carrier)-SH + AH2 + 2 S-adenosyl-L-methionine = 3-methylsulfanyl-L-aspartate(89)-[ribosomal protein uS12]-hydrogen + (sulfur carrier)-H + 5'-deoxyadenosine + L-methionine + A + S-adenosyl-L-homocysteine + 2 H(+). Catalyzes the methylthiolation of an aspartic acid residue of ribosomal protein uS12. The chain is Ribosomal protein uS12 methylthiotransferase RimO from Xanthomonas axonopodis pv. citri (strain 306).